A 231-amino-acid chain; its full sequence is MKETRPIIALDFAGKEEVQSFLEQFPPDEKLYVKVGMELYYAEGPGIINYLKDCGHSIFLDLKLHDIPNTVESAMKVLAKLGVDMTNVHAAGGVEMMRAARRGLGKDAVLIAVTQLTSTSEEQMRTDQNIQTSLQEAVVHYAQRAQEAGLDGVVCSAHEVALIKDATSSDFVCLTPGIRPTGGEVGDQKRVMTPADAARIGSDYIVVGRPITKSEHPYQTYLSIKEEWNRG.

Substrate is bound by residues Asp-11, Lys-34, 61-70 (DLKLHDIPNT), Thr-117, Arg-179, Gln-188, Gly-208, and Arg-209. Lys-63 serves as the catalytic Proton donor.

The protein belongs to the OMP decarboxylase family. Type 1 subfamily. Homodimer.

The enzyme catalyses orotidine 5'-phosphate + H(+) = UMP + CO2. It functions in the pathway pyrimidine metabolism; UMP biosynthesis via de novo pathway; UMP from orotate: step 2/2. Functionally, catalyzes the decarboxylation of orotidine 5'-monophosphate (OMP) to uridine 5'-monophosphate (UMP). This is Orotidine 5'-phosphate decarboxylase from Streptococcus suis (strain 98HAH33).